The following is a 473-amino-acid chain: Aspartyl/glutamyl-tRNA(Asn/Gln) amidotransferase subunit B (473 aa).

This sequence belongs to the GatB/GatE family. GatB subfamily. Heterotrimer of A, B and C subunits.

It catalyses the reaction L-glutamyl-tRNA(Gln) + L-glutamine + ATP + H2O = L-glutaminyl-tRNA(Gln) + L-glutamate + ADP + phosphate + H(+). It carries out the reaction L-aspartyl-tRNA(Asn) + L-glutamine + ATP + H2O = L-asparaginyl-tRNA(Asn) + L-glutamate + ADP + phosphate + 2 H(+). In terms of biological role, allows the formation of correctly charged Asn-tRNA(Asn) or Gln-tRNA(Gln) through the transamidation of misacylated Asp-tRNA(Asn) or Glu-tRNA(Gln) in organisms which lack either or both of asparaginyl-tRNA or glutaminyl-tRNA synthetases. The reaction takes place in the presence of glutamine and ATP through an activated phospho-Asp-tRNA(Asn) or phospho-Glu-tRNA(Gln). This chain is Aspartyl/glutamyl-tRNA(Asn/Gln) amidotransferase subunit B, found in Francisella tularensis subsp. tularensis (strain FSC 198).